Consider the following 320-residue polypeptide: Citrate synthase (320 aa).

Catalysis depends on residues His249 and Asp307.

The protein belongs to the citrate synthase family.

It catalyses the reaction oxaloacetate + acetyl-CoA + H2O = citrate + CoA + H(+). Its pathway is carbohydrate metabolism; tricarboxylic acid cycle; isocitrate from oxaloacetate: step 1/2. This Bartonella doshiae protein is Citrate synthase (gltA).